Here is a 313-residue protein sequence, read N- to C-terminus: Ribosomal RNA small subunit methyltransferase H (313 aa).

S-adenosyl-L-methionine is bound by residues 35 to 37 (GGH), Asp55, Phe80, Asp102, and Gln109.

Belongs to the methyltransferase superfamily. RsmH family.

It localises to the cytoplasm. It carries out the reaction cytidine(1402) in 16S rRNA + S-adenosyl-L-methionine = N(4)-methylcytidine(1402) in 16S rRNA + S-adenosyl-L-homocysteine + H(+). Specifically methylates the N4 position of cytidine in position 1402 (C1402) of 16S rRNA. The protein is Ribosomal RNA small subunit methyltransferase H of Shewanella amazonensis (strain ATCC BAA-1098 / SB2B).